Here is a 431-residue protein sequence, read N- to C-terminus: 3-isopropylmalate dehydratase large subunit (431 aa).

[4Fe-4S] cluster-binding residues include cysteine 300, cysteine 360, and cysteine 363.

The protein belongs to the aconitase/IPM isomerase family. LeuC type 2 subfamily. In terms of assembly, heterodimer of LeuC and LeuD. [4Fe-4S] cluster serves as cofactor.

The enzyme catalyses (2R,3S)-3-isopropylmalate = (2S)-2-isopropylmalate. It functions in the pathway amino-acid biosynthesis; L-leucine biosynthesis; L-leucine from 3-methyl-2-oxobutanoate: step 2/4. Catalyzes the isomerization between 2-isopropylmalate and 3-isopropylmalate, via the formation of 2-isopropylmaleate. The polypeptide is 3-isopropylmalate dehydratase large subunit (Sulfurihydrogenibium sp. (strain YO3AOP1)).